The primary structure comprises 376 residues: Small ribosomal subunit protein uS11m (376 aa).

This sequence belongs to the universal ribosomal protein uS11 family. In terms of assembly, component of the mitochondrial small ribosomal subunit (mt-SSU). Mature N.crassa 74S mitochondrial ribosomes consist of a small (37S) and a large (54S) subunit. The 37S small subunit contains a 16S ribosomal RNA (16S mt-rRNA) and 32 different proteins. The 54S large subunit contains a 23S rRNA (23S mt-rRNA) and 42 different proteins.

It localises to the mitochondrion. In terms of biological role, component of the mitochondrial ribosome (mitoribosome), a dedicated translation machinery responsible for the synthesis of mitochondrial genome-encoded proteins, including at least some of the essential transmembrane subunits of the mitochondrial respiratory chain. The mitoribosomes are attached to the mitochondrial inner membrane and translation products are cotranslationally integrated into the membrane. The protein is Small ribosomal subunit protein uS11m (mrps18) of Neurospora crassa (strain ATCC 24698 / 74-OR23-1A / CBS 708.71 / DSM 1257 / FGSC 987).